The primary structure comprises 148 residues: uncharacterized protein (148 aa).

Positions 21, 24, 88, and 117 each coordinate [4Fe-4S] cluster.

Belongs to the complex I 20 kDa subunit family. The cofactor is [4Fe-4S] cluster.

This is an uncharacterized protein from Methanocaldococcus jannaschii (strain ATCC 43067 / DSM 2661 / JAL-1 / JCM 10045 / NBRC 100440) (Methanococcus jannaschii).